We begin with the raw amino-acid sequence, 129 residues long: Ribulose bisphosphate carboxylase small subunit (129 aa).

The segment at 109–129 is disordered; the sequence is LRMTRTESNGRSQHYMWETQR.

The protein belongs to the RuBisCO small chain family. In terms of assembly, heterohexadecamer of 8 large and 8 small subunits.

RuBisCO catalyzes two reactions: the carboxylation of D-ribulose 1,5-bisphosphate, the primary event in carbon dioxide fixation, as well as the oxidative fragmentation of the pentose substrate. Both reactions occur simultaneously and in competition at the same active site. Although the small subunit is not catalytic it is essential for maximal activity. This is Ribulose bisphosphate carboxylase small subunit from Rhizobium meliloti (strain 1021) (Ensifer meliloti).